The chain runs to 209 residues: V-type ATP synthase subunit D (209 aa).

It belongs to the V-ATPase D subunit family.

Produces ATP from ADP in the presence of a proton gradient across the membrane. This is V-type ATP synthase subunit D from Anaeromyxobacter sp. (strain K).